Reading from the N-terminus, the 287-residue chain is Methylamine utilization ferredoxin-type protein MauN (287 aa).

2 consecutive 4Fe-4S ferredoxin-type domains span residues 218–248 (RVAA…PALK) and 251–280 (GSTL…MTMR). 8 residues coordinate [4Fe-4S] cluster: cysteine 227, cysteine 230, cysteine 233, cysteine 237, cysteine 260, cysteine 263, cysteine 266, and cysteine 270.

It functions in the pathway one-carbon metabolism; methylamine degradation. Its function is as follows. Involved in electron transfer. The sequence is that of Methylamine utilization ferredoxin-type protein MauN (mauN) from Methylorubrum extorquens (strain ATCC 14718 / DSM 1338 / JCM 2805 / NCIMB 9133 / AM1) (Methylobacterium extorquens).